The sequence spans 117 residues: Large ribosomal subunit protein bL20 (117 aa).

The protein belongs to the bacterial ribosomal protein bL20 family.

Functionally, binds directly to 23S ribosomal RNA and is necessary for the in vitro assembly process of the 50S ribosomal subunit. It is not involved in the protein synthesizing functions of that subunit. This is Large ribosomal subunit protein bL20 from Mesomycoplasma hyopneumoniae (strain J / ATCC 25934 / NCTC 10110) (Mycoplasma hyopneumoniae).